Reading from the N-terminus, the 151-residue chain is Deoxyuridine 5'-triphosphate nucleotidohydrolase (151 aa).

Substrate contacts are provided by residues 70–72 (RSG), asparagine 83, 87–89 (LID), and methionine 97.

Belongs to the dUTPase family. The cofactor is Mg(2+).

It catalyses the reaction dUTP + H2O = dUMP + diphosphate + H(+). The protein operates within pyrimidine metabolism; dUMP biosynthesis; dUMP from dCTP (dUTP route): step 2/2. Its function is as follows. This enzyme is involved in nucleotide metabolism: it produces dUMP, the immediate precursor of thymidine nucleotides and it decreases the intracellular concentration of dUTP so that uracil cannot be incorporated into DNA. This chain is Deoxyuridine 5'-triphosphate nucleotidohydrolase, found in Pseudomonas entomophila (strain L48).